We begin with the raw amino-acid sequence, 146 residues long: Anti-sigma F factor (146 aa).

It belongs to the anti-sigma-factor family.

The catalysed reaction is L-seryl-[protein] + ATP = O-phospho-L-seryl-[protein] + ADP + H(+). The enzyme catalyses L-threonyl-[protein] + ATP = O-phospho-L-threonyl-[protein] + ADP + H(+). Binds to sigma F and blocks its ability to form an RNA polymerase holoenzyme (E-sigma F). Phosphorylates SpoIIAA on a serine residue. This phosphorylation may enable SpoIIAA to act as an anti-anti-sigma factor that counteracts SpoIIAB and thus releases sigma F from inhibition. The chain is Anti-sigma F factor from Geobacillus kaustophilus (strain HTA426).